Here is an 86-residue protein sequence, read N- to C-terminus: Neurotoxin 8-related gene product 1/2/3 (86 aa).

The N-terminal stretch at 1-19 (MNYLTMISLALLVMTGVES) is a signal peptide. Positions 22–84 (RDAYIADNKN…VPIKVPGKCN (63 aa)) constitute an LCN-type CS-alpha/beta domain. 4 disulfides stabilise this stretch: C32-C83, C36-C56, C42-C66, and C46-C68. At N84 the chain carries Asparagine amide.

The protein belongs to the long (4 C-C) scorpion toxin superfamily. Sodium channel inhibitor family. Alpha subfamily. In terms of tissue distribution, expressed by the venom gland.

It localises to the secreted. Its function is as follows. Binds voltage-dependently at site-3 of sodium channels (Nav) and inhibits the inactivation of the activated channels, thereby blocking neuronal transmission. This is Neurotoxin 8-related gene product 1/2/3 (NTVIIIrgp1) from Androctonus mauritanicus mauritanicus (Scorpion).